The sequence spans 83 residues: Probable calcium-binding protein CML29 (83 aa).

EF-hand domains are found at residues 5 to 40 (TEKAEHDRIFKKFDANGDGKISAAELEEALKTLGSV) and 43 to 75 (DDVKRMMAEIDTDGDGNISYQEFTDFAGANRGL). 10 residues coordinate Ca(2+): Asp18, Asn20, Asp22, Lys24, Glu29, Asp53, Asp55, Asp57, Asn59, and Glu64.

Its function is as follows. Potential calcium sensor. This Arabidopsis thaliana (Mouse-ear cress) protein is Probable calcium-binding protein CML29 (CML29).